We begin with the raw amino-acid sequence, 151 residues long: SsrA-binding protein (151 aa).

The tract at residues 132–151 (KRQTIKKRDQDREIHRKYGI) is disordered.

Belongs to the SmpB family.

Its subcellular location is the cytoplasm. In terms of biological role, required for rescue of stalled ribosomes mediated by trans-translation. Binds to transfer-messenger RNA (tmRNA), required for stable association of tmRNA with ribosomes. tmRNA and SmpB together mimic tRNA shape, replacing the anticodon stem-loop with SmpB. tmRNA is encoded by the ssrA gene; the 2 termini fold to resemble tRNA(Ala) and it encodes a 'tag peptide', a short internal open reading frame. During trans-translation Ala-aminoacylated tmRNA acts like a tRNA, entering the A-site of stalled ribosomes, displacing the stalled mRNA. The ribosome then switches to translate the ORF on the tmRNA; the nascent peptide is terminated with the 'tag peptide' encoded by the tmRNA and targeted for degradation. The ribosome is freed to recommence translation, which seems to be the essential function of trans-translation. This Lactobacillus johnsonii (strain CNCM I-12250 / La1 / NCC 533) protein is SsrA-binding protein.